We begin with the raw amino-acid sequence, 34 residues long: Photosystem II reaction center protein M (34 aa).

Residues 5 to 25 (ILAFIATALFILIPTSFLLII) traverse the membrane as a helical segment.

Belongs to the PsbM family. In terms of assembly, PSII is composed of 1 copy each of membrane proteins PsbA, PsbB, PsbC, PsbD, PsbE, PsbF, PsbH, PsbI, PsbJ, PsbK, PsbL, PsbM, PsbT, PsbX, PsbY, PsbZ, Psb30/Ycf12, at least 3 peripheral proteins of the oxygen-evolving complex and a large number of cofactors. It forms dimeric complexes. Detected in both etioplasts and green leaves; PSII is only assembled in green leaves.

It localises to the plastid. The protein resides in the chloroplast thylakoid membrane. Its function is as follows. One of the components of the core complex of photosystem II (PSII). PSII is a light-driven water:plastoquinone oxidoreductase that uses light energy to abstract electrons from H(2)O, generating O(2) and a proton gradient subsequently used for ATP formation. It consists of a core antenna complex that captures photons, and an electron transfer chain that converts photonic excitation into a charge separation. This subunit is found at the monomer-monomer interface. This Hordeum vulgare (Barley) protein is Photosystem II reaction center protein M.